The primary structure comprises 171 residues: uncharacterized protein (171 aa).

The N-terminal stretch at 1-17 (MLKRIIWILFLLGLTWG) is a signal peptide.

In terms of biological role, part of the elfADCG-ycbUVF fimbrial operon, which promotes adhesion of bacteria to different abiotic surfaces. This is an uncharacterized protein from Escherichia coli (strain K12).